Reading from the N-terminus, the 319-residue chain is Protease HtpX homolog (319 aa).

2 helical membrane passes run 6–26 (TAML…VIGG) and 28–48 (GGMM…YWNS). H130 lines the Zn(2+) pocket. The active site involves E131. H134 provides a ligand contact to Zn(2+). The next 2 membrane-spanning stretches (helical) occupy residues 145-165 (LTAT…FFGG) and 172-192 (PLGF…AMLV). E201 is a binding site for Zn(2+). Residues 279-319 (REMSAGSTAPARPDNAVRRSRSVPKTGWGRGGSEPPKGPWS) are disordered.

Belongs to the peptidase M48B family. The cofactor is Zn(2+).

It is found in the cell inner membrane. The sequence is that of Protease HtpX homolog from Sinorhizobium fredii (strain NBRC 101917 / NGR234).